A 213-amino-acid polypeptide reads, in one-letter code: Thymidylate kinase (213 aa).

10 to 17 contacts ATP; it reads GLEGAGKT.

It belongs to the thymidylate kinase family.

It carries out the reaction dTMP + ATP = dTDP + ADP. In terms of biological role, phosphorylation of dTMP to form dTDP in both de novo and salvage pathways of dTTP synthesis. In Salmonella arizonae (strain ATCC BAA-731 / CDC346-86 / RSK2980), this protein is Thymidylate kinase.